The sequence spans 164 residues: UPF0304 protein KPK_1463 (164 aa).

It belongs to the UPF0304 family.

This Klebsiella pneumoniae (strain 342) protein is UPF0304 protein KPK_1463.